Here is a 275-residue protein sequence, read N- to C-terminus: 3-methyl-2-oxobutanoate hydroxymethyltransferase (275 aa).

Mg(2+)-binding residues include Asp49 and Asp88. Residues 49–50 (DS), Asp88, and Lys118 each bind 3-methyl-2-oxobutanoate. Glu120 contributes to the Mg(2+) binding site. Glu187 acts as the Proton acceptor in catalysis.

Belongs to the PanB family. In terms of assembly, homodecamer; pentamer of dimers. The cofactor is Mg(2+).

It is found in the cytoplasm. The catalysed reaction is 3-methyl-2-oxobutanoate + (6R)-5,10-methylene-5,6,7,8-tetrahydrofolate + H2O = 2-dehydropantoate + (6S)-5,6,7,8-tetrahydrofolate. The protein operates within cofactor biosynthesis; (R)-pantothenate biosynthesis; (R)-pantoate from 3-methyl-2-oxobutanoate: step 1/2. Functionally, catalyzes the reversible reaction in which hydroxymethyl group from 5,10-methylenetetrahydrofolate is transferred onto alpha-ketoisovalerate to form ketopantoate. The chain is 3-methyl-2-oxobutanoate hydroxymethyltransferase from Brucella suis (strain ATCC 23445 / NCTC 10510).